The following is a 248-amino-acid chain: Triosephosphate isomerase (248 aa).

A substrate-binding site is contributed by 9 to 11 (NWK). Residue His93 is the Electrophile of the active site. Glu163 acts as the Proton acceptor in catalysis. Substrate is bound by residues Gly169, Ser208, and 229–230 (GG).

The protein belongs to the triosephosphate isomerase family. As to quaternary structure, homodimer.

The protein resides in the cytoplasm. The enzyme catalyses D-glyceraldehyde 3-phosphate = dihydroxyacetone phosphate. Its pathway is carbohydrate biosynthesis; gluconeogenesis. The protein operates within carbohydrate degradation; glycolysis; D-glyceraldehyde 3-phosphate from glycerone phosphate: step 1/1. In terms of biological role, involved in the gluconeogenesis. Catalyzes stereospecifically the conversion of dihydroxyacetone phosphate (DHAP) to D-glyceraldehyde-3-phosphate (G3P). The chain is Triosephosphate isomerase from Jannaschia sp. (strain CCS1).